Consider the following 500-residue polypeptide: MTDIENKNYIIALDQGTTSSRAIIFDRDANVVCTAQREFAQHYPQAGWVEHDPMEIFATQSAVMVEALAQAGLHHDQVAAIGITNQRETTVVWDKTTGRPVYNAIVWQCRRSTEICQQLKRDGHEDYIRDTTGLVTDPYFSGTKLKWILDNVEGSRERARNGELLFGTVDSWLIWKFTGGKVHVTDYTNASRTMLFNIHTLEWDAKMLEILDIPREMLPEVKASSEIYGRTKSGIAIGGIAGDQQAALFGQMCVEPGQAKNTYGTGCFLLMNTGDKAVKSQHGMLTTIACGPRGEVAYALEGAVFNGGSTVQWLRDELKIVNDAHDTEYFANKVKDSNGVYLVPAFTGLGAPYWDPYARGALFGLTRGVRVDHIIRAALESIAYQTRDVLDAMQQDSGERLKALRVDGGAVANNFLMQFQADILGTQVERPKMRETTALGAAYLAGLACGFWGSLEELRGKAVIEREFEPSLDEVEKEKLYKGWKKAVSRTRDWAREDAE.

Thr17 lines the ADP pocket. Residues Thr17, Thr18, and Ser19 each contribute to the ATP site. Thr17 is a sn-glycerol 3-phosphate binding site. Arg21 is an ADP binding site. Arg87, Glu88, Tyr139, and Asp243 together coordinate sn-glycerol 3-phosphate. The glycerol site is built by Arg87, Glu88, Tyr139, Asp243, and Gln244. ADP is bound by residues Thr265 and Gly308. The ATP site is built by Thr265, Gly308, Gln312, and Gly409. ADP is bound by residues Gly409 and Asn413.

The protein belongs to the FGGY kinase family.

It carries out the reaction glycerol + ATP = sn-glycerol 3-phosphate + ADP + H(+). It functions in the pathway polyol metabolism; glycerol degradation via glycerol kinase pathway; sn-glycerol 3-phosphate from glycerol: step 1/1. Its activity is regulated as follows. Inhibited by fructose 1,6-bisphosphate (FBP). Its function is as follows. Key enzyme in the regulation of glycerol uptake and metabolism. Catalyzes the phosphorylation of glycerol to yield sn-glycerol 3-phosphate. This Pseudomonas fluorescens (strain Pf0-1) protein is Glycerol kinase.